Here is a 52-residue protein sequence, read N- to C-terminus: Photosystem II reaction center protein M (52 aa).

A helical membrane pass occupies residues 6 to 26 (FGFAASLLFVGVPTIFLIGLF). Positions 31–52 (DGEKSSFYSDTSKGRLSPEPKK) are disordered. Residues 42-52 (SKGRLSPEPKK) show a composition bias toward basic and acidic residues.

It belongs to the PsbM family. In terms of assembly, PSII is composed of 1 copy each of membrane proteins PsbA, PsbB, PsbC, PsbD, PsbE, PsbF, PsbH, PsbI, PsbJ, PsbK, PsbL, PsbM, PsbT, PsbX, PsbY, Psb30/Ycf12, peripheral proteins PsbO, CyanoQ (PsbQ), PsbU, PsbV and a large number of cofactors. It forms dimeric complexes.

The protein localises to the cellular thylakoid membrane. Functionally, one of the components of the core complex of photosystem II (PSII). PSII is a light-driven water:plastoquinone oxidoreductase that uses light energy to abstract electrons from H(2)O, generating O(2) and a proton gradient subsequently used for ATP formation. It consists of a core antenna complex that captures photons, and an electron transfer chain that converts photonic excitation into a charge separation. This subunit is found at the monomer-monomer interface. The sequence is that of Photosystem II reaction center protein M from Prochlorococcus marinus (strain NATL1A).